We begin with the raw amino-acid sequence, 856 residues long: Centrosomal protein of 97 kDa (856 aa).

LRR repeat units lie at residues 37-58 (DVHTLILDKNQIIKLENLEKCK), 59-80 (QLIQLSVANNRLVRMMGVAKLT), 81-102 (QLRVLNLPHNSIGCVEGLKDLV), 103-124 (HLEWLNLAGNNLKTMEQVNSCT), 125-146 (ALQHLDLSDNNIPQIGDVSKLI), 147-168 (SLKTLLLHGNIITSLRMAPAYL), 171-192 (NLSILSLAENEIRDLNEISFLA), and 196-205 (ELEQLSIMNN). In terms of domain architecture, LRRCT spans 211–249 (TPSIPGFDYRPFIVSWCLNLRVLDGYVISQKESLKAEWL). The CCP110-binding stretch occupies residues 300-742 (HQRQLMSQSQ…KCVKDRDSEA (443 aa)). Phosphoserine occurs at positions 308 and 410. Positions 430 to 451 (DDGADEFTKGLENQDEDKDKEK) are disordered. Phosphoserine is present on Ser-497. Over residues 498 to 513 (LTSLPESAGHSASRTE) the composition is skewed to polar residues. The segment at 498 to 525 (LTSLPESAGHSASRTEANSEEAMSPATS) is disordered. Ser-521 is modified (phosphoserine). Thr-534 is modified (phosphothreonine). The IQ domain maps to 550–579 (LNAAATKLQACWRGFYTRNYNQQAKGVRYE). Residues 579–853 (EIRLRRMQEH…FQGLHVGVTV (275 aa)) form an interaction with MPHOSPH9 region. Disordered regions lie at residues 646 to 672 (PPISSTLASPKPPLFPHHQDPSSDQSS) and 737 to 840 (DRDS…PPEC). The span at 737–752 (DRDSEATAEEHSDCSR) shows a compositional bias: basic and acidic residues. Positions 753–773 (ESSASEQDNTLLQQYLTSVQQ) are enriched in polar residues. Ser-755 is modified (phosphoserine). Acidic residues predominate over residues 776–787 (DAAEAADSDDVA). Positions 799-811 (ERFDASSDSETHR) are enriched in basic and acidic residues. Residues 812–833 (VASTSQDEISQTPENCQLNEEA) are compositionally biased toward polar residues.

As to quaternary structure, interacts with CALM1, CEP76, KIF24 and TALPID3. Interacts with CCP110. ENKD1 competes with CEP97 for binding to CCP110, destabilizing the interaction between CP110 and CEP97 which promotes the removal of CCP110 and CEP97 from the mother centriole and allows the initiation of ciliogenesis. Via its interaction with CCP110, may indirectly interact with HERC2 and NEURL4. Interacts with MPHOSPH9.

The protein localises to the cytoplasm. It localises to the cytoskeleton. Its subcellular location is the microtubule organizing center. It is found in the centrosome. The protein resides in the centriole. Its function is as follows. Acts as a key negative regulator of ciliogenesis in collaboration with CCP110 by capping the mother centriole thereby preventing cilia formation. Required for recruitment of CCP110 to the centrosome. This chain is Centrosomal protein of 97 kDa (Cep97), found in Mus musculus (Mouse).